A 351-amino-acid chain; its full sequence is 3-dehydroquinate synthase (351 aa).

Residues 60–65 (DGEEYK), 94–98 (GVISD), 118–119 (TT), Lys131, Lys140, and 158–161 (FLKT) each bind NAD(+). Residues Glu173, His239, and His256 each coordinate Zn(2+).

The protein belongs to the sugar phosphate cyclases superfamily. Dehydroquinate synthase family. It depends on Co(2+) as a cofactor. Zn(2+) is required as a cofactor. Requires NAD(+) as cofactor.

The protein localises to the cytoplasm. It catalyses the reaction 7-phospho-2-dehydro-3-deoxy-D-arabino-heptonate = 3-dehydroquinate + phosphate. It participates in metabolic intermediate biosynthesis; chorismate biosynthesis; chorismate from D-erythrose 4-phosphate and phosphoenolpyruvate: step 2/7. Its function is as follows. Catalyzes the conversion of 3-deoxy-D-arabino-heptulosonate 7-phosphate (DAHP) to dehydroquinate (DHQ). This chain is 3-dehydroquinate synthase, found in Campylobacter jejuni subsp. doylei (strain ATCC BAA-1458 / RM4099 / 269.97).